The chain runs to 333 residues: Tetraacyldisaccharide 4'-kinase (333 aa).

55-62 lines the ATP pocket; the sequence is SVGGNGKT.

The protein belongs to the LpxK family.

The catalysed reaction is a lipid A disaccharide + ATP = a lipid IVA + ADP + H(+). The protein operates within glycolipid biosynthesis; lipid IV(A) biosynthesis; lipid IV(A) from (3R)-3-hydroxytetradecanoyl-[acyl-carrier-protein] and UDP-N-acetyl-alpha-D-glucosamine: step 6/6. Its function is as follows. Transfers the gamma-phosphate of ATP to the 4'-position of a tetraacyldisaccharide 1-phosphate intermediate (termed DS-1-P) to form tetraacyldisaccharide 1,4'-bis-phosphate (lipid IVA). This chain is Tetraacyldisaccharide 4'-kinase, found in Aeromonas hydrophila subsp. hydrophila (strain ATCC 7966 / DSM 30187 / BCRC 13018 / CCUG 14551 / JCM 1027 / KCTC 2358 / NCIMB 9240 / NCTC 8049).